Reading from the N-terminus, the 233-residue chain is MSQSPIELKGSSFTLSVVHLYNSEPEVIRQALQEKVEQAPAFLKNAPVVINVATLNGDANWKELQQAVTAAGLRVVGISGCRDERQKRAIARAGLPLLNEGKGQKMATPEPAPAPAPVVDPNAPAKTRIISTPVRSGQQIYARNSDLIVTSSVSAGAELIADGNIHVYGMMRGRALAGASGDTQCQIFCTHLGAELVSIAGQYWLSDQIPSDFVGQAVRLSLLDNALTIQPLN.

A disordered region spans residues 104–124; sequence QKMATPEPAPAPAPVVDPNAP.

The protein belongs to the MinC family. Interacts with MinD and FtsZ.

Cell division inhibitor that blocks the formation of polar Z ring septums. Rapidly oscillates between the poles of the cell to destabilize FtsZ filaments that have formed before they mature into polar Z rings. Prevents FtsZ polymerization. This Serratia proteamaculans (strain 568) protein is Probable septum site-determining protein MinC.